A 115-amino-acid polypeptide reads, in one-letter code: Histone H2A.Z-specific chaperone chz1 (115 aa).

The segment covering 1-11 (MSESNQATFQG) has biased composition (polar residues). Residues 1-115 (MSESNQATFQ…DDEDFKPSDK (115 aa)) are disordered. Low complexity predominate over residues 13-22 (DPAAHAPDAA). Residues 23–33 (AYDKGKGKAVE) are compositionally biased toward basic and acidic residues. 2 stretches are compositionally biased toward acidic residues: residues 34–64 (DMDVSMDEEEEESEESDAEIMVEDEDDDGDS) and 98–109 (DEMDDEEDDDED).

It belongs to the CHZ1 family. As to quaternary structure, forms a heterotrimer with H2A.Z-H2B, stabilizing the association of the histone dimer. Also, with a lower affinity, forms a heterotrimer with H2A-H2B.

Its subcellular location is the nucleus. Functionally, forms a chaperone-bound H2A.Z-H2B complex that acts as a source for SWR1 complex-dependent H2A to H2A.Z histone replacement in chromatin. The protein is Histone H2A.Z-specific chaperone chz1 (chz1) of Emericella nidulans (strain FGSC A4 / ATCC 38163 / CBS 112.46 / NRRL 194 / M139) (Aspergillus nidulans).